The sequence spans 365 residues: 3-isopropylmalate dehydrogenase (365 aa).

Position 80-91 (80-91 (GPKWGTGAVRPE)) interacts with NAD(+). Positions 98, 108, 137, and 226 each coordinate substrate. 3 residues coordinate Mg(2+): Asp226, Asp251, and Asp255. 290-301 (GSAPDLPKGKVN) serves as a coordination point for NAD(+).

This sequence belongs to the isocitrate and isopropylmalate dehydrogenases family. As to quaternary structure, homodimer. Mg(2+) serves as cofactor. It depends on Mn(2+) as a cofactor.

It localises to the cytoplasm. The catalysed reaction is (2R,3S)-3-isopropylmalate + NAD(+) = 4-methyl-2-oxopentanoate + CO2 + NADH. Its pathway is amino-acid biosynthesis; L-leucine biosynthesis; L-leucine from 3-methyl-2-oxobutanoate: step 3/4. Functionally, catalyzes the oxidation of 3-carboxy-2-hydroxy-4-methylpentanoate (3-isopropylmalate) to 3-carboxy-4-methyl-2-oxopentanoate. The product decarboxylates to 4-methyl-2 oxopentanoate. This Candida glabrata (strain ATCC 2001 / BCRC 20586 / JCM 3761 / NBRC 0622 / NRRL Y-65 / CBS 138) (Yeast) protein is 3-isopropylmalate dehydrogenase (LEU2).